The following is a 159-amino-acid chain: Growth arrest and DNA damage-inducible protein GADD45 gamma (159 aa).

The interval 43–86 is homodimerization; it reads VYESAKVLNVDPDNVTFCVLAAGEEDEGDIALQIHFTLIQAFCC.

This sequence belongs to the GADD45 family. In terms of assembly, undergoes concentration-dependent homodimerization, which is required for growth inhibititory activity and enhances interaction with PCNA. Interacts with GADD45GIP1. Interacts with PCNA.

Involved in the regulation of growth and apoptosis. Mediates activation of stress-responsive MTK1/MEKK4 MAPKKK. This is Growth arrest and DNA damage-inducible protein GADD45 gamma (GADD45G) from Homo sapiens (Human).